The following is a 179-amino-acid chain: UPF0134 protein MPN_145 (179 aa).

The protein belongs to the UPF0134 family.

This Mycoplasma pneumoniae (strain ATCC 29342 / M129 / Subtype 1) (Mycoplasmoides pneumoniae) protein is UPF0134 protein MPN_145.